The following is a 344-amino-acid chain: MALLAPGTPIREGLDRIVNGRTGGLIVLGDGPEINGVCSGGFPLDVRLTPQALRELSKMDGGLVVSSDHERIKAAAVHFVPDGSLPTLETGTRHRTADRLSQQTGVPVVVVSASMSVMSLFLNGRRYLIERPEQLLARANQALATLASYRGRLVDEAENLTTLEIRDQVQVRDVAAVAQRVEMWRRIDAEVRGYVSALGVEGRLVQLQRNELSLGVEDLGRLLTDDYRPNSVAPGGFSLSGLQKLSWEDLLNVTMVAETINLGPAEHPLDSPIRARGHRQLTLMTDLSSRTIQRIIDHFSDLQSLVSASTSELGDIKGVGLRRAREIRQGLESIFEGDQRTHHH.

A DAC domain is found at 1–133 (MALLAPGTPI…GRRYLIERPE (133 aa)). Residues glycine 61 and 92-96 (TRHRT) contribute to the ATP site.

It belongs to the DisA family. Homooctamer. Mg(2+) is required as a cofactor.

It carries out the reaction 2 ATP = 3',3'-c-di-AMP + 2 diphosphate. In terms of biological role, participates in a DNA-damage check-point. DisA forms globular foci that rapidly scan along the chromosomes searching for lesions. Functionally, also has diadenylate cyclase activity, catalyzing the condensation of 2 ATP molecules into cyclic di-AMP (c-di-AMP). c-di-AMP likely acts as a signaling molecule that may couple DNA integrity with a cellular process. This Cutibacterium acnes (strain DSM 16379 / KPA171202) (Propionibacterium acnes) protein is DNA integrity scanning protein DisA.